The primary structure comprises 338 residues: Formimidoylglutamase (338 aa).

Mn(2+) contacts are provided by H137, D166, H168, D170, C259, and D261.

Belongs to the arginase family. It depends on Mn(2+) as a cofactor.

The catalysed reaction is N-formimidoyl-L-glutamate + H2O = formamide + L-glutamate. It functions in the pathway amino-acid degradation; L-histidine degradation into L-glutamate; L-glutamate from N-formimidoyl-L-glutamate (hydrolase route): step 1/1. Its function is as follows. Catalyzes the conversion of N-formimidoyl-L-glutamate to L-glutamate and formamide. The chain is Formimidoylglutamase from Clostridium tetani (strain Massachusetts / E88).